We begin with the raw amino-acid sequence, 335 residues long: Probable cytosolic iron-sulfur protein assembly protein Ciao1 (335 aa).

WD repeat units follow at residues 12 to 51 (GHKG…WGTK), 57 to 96 (GHKR…FECN), 101 to 140 (GHEN…EFEC), 146 to 185 (PHTQ…NDWD), 192 to 231 (SHTS…NTAG), 250 to 289 (QHSR…KPDE), and 301 to 335 (AHDQ…KVSE).

Belongs to the WD repeat CIA1 family.

In terms of biological role, essential component of the cytosolic iron-sulfur (Fe/S) protein assembly machinery. Required for the maturation of extramitochondrial Fe/S proteins. This chain is Probable cytosolic iron-sulfur protein assembly protein Ciao1, found in Drosophila sechellia (Fruit fly).